The sequence spans 272 residues: 3-keto-5-aminohexanoate cleavage enzyme (272 aa).

Glu-15 contributes to the (5S)-5-amino-3-oxohexanoate binding site. The Zn(2+) site is built by His-47 and His-49. (5S)-5-amino-3-oxohexanoate contacts are provided by Ser-83, Gly-86, and Thr-107. Zn(2+) is bound at residue Glu-226.

This sequence belongs to the BKACE family. Kce subfamily. As to quaternary structure, homotetramer. Zn(2+) is required as a cofactor.

The enzyme catalyses (5S)-5-amino-3-oxohexanoate + acetyl-CoA = (3S)-3-aminobutanoyl-CoA + acetoacetate. It functions in the pathway amino-acid degradation; L-lysine degradation via acetate pathway. 3-fold increase in activity by addition of 10 mM 2-mercaptoethanol. Addition of CoCl(2) and to a lesser extent MnCl(2) increases the activity but not MgCl(2). Inhibited by phosphate buffer but not by 5,5'-dithio-2-nitrobenzoic acid. Its function is as follows. Involved in the anaerobic fermentation of lysine. Catalyzes the reversible reaction between 3-keto-5-aminohexanoate (KAH) and acetyl-CoA to form 3-aminobutyryl-CoA and acetoacetate. The reaction involves the deprotonation of KAH, the nucleophilic addition onto acetyl-CoA and the intramolecular transfer of the CoA moiety. It can also use beta-alanyl-CoA as substrate. The polypeptide is 3-keto-5-aminohexanoate cleavage enzyme (Fusobacterium nucleatum subsp. nucleatum (strain ATCC 25586 / DSM 15643 / BCRC 10681 / CIP 101130 / JCM 8532 / KCTC 2640 / LMG 13131 / VPI 4355)).